The chain runs to 266 residues: Undecaprenyl-diphosphatase (266 aa).

A run of 8 helical transmembrane segments spans residues 1–21, 39–59, 87–107, 115–135, 144–164, 183–203, 218–238, and 246–266; these read MDTF…FLPI, QGLS…VMYF, WWII…KDFI, AVIA…DRMF, VGWK…IPGT, AAAR…AILV, ALSL…HLFL, and MTPF…FMFA.

It belongs to the UppP family.

The protein resides in the cell inner membrane. It catalyses the reaction di-trans,octa-cis-undecaprenyl diphosphate + H2O = di-trans,octa-cis-undecaprenyl phosphate + phosphate + H(+). Functionally, catalyzes the dephosphorylation of undecaprenyl diphosphate (UPP). Confers resistance to bacitracin. This Shewanella sediminis (strain HAW-EB3) protein is Undecaprenyl-diphosphatase.